The sequence spans 150 residues: 3-hydroxyacyl-[acyl-carrier-protein] dehydratase FabZ (150 aa).

His54 is an active-site residue.

Belongs to the thioester dehydratase family. FabZ subfamily.

The protein resides in the cytoplasm. The enzyme catalyses a (3R)-hydroxyacyl-[ACP] = a (2E)-enoyl-[ACP] + H2O. Functionally, involved in unsaturated fatty acids biosynthesis. Catalyzes the dehydration of short chain beta-hydroxyacyl-ACPs and long chain saturated and unsaturated beta-hydroxyacyl-ACPs. This Vibrio vulnificus (strain CMCP6) protein is 3-hydroxyacyl-[acyl-carrier-protein] dehydratase FabZ.